The chain runs to 304 residues: NuA3 HAT complex component PDP3 (304 aa).

Positions 7-68 constitute a PWWP domain; that stretch reads TGDLVLCKVG…PSRLKELDQD (62 aa). The segment at 145-195 is disordered; it reads KKNSISIKEDPEDNQKSNEEESKPNIKPSKKKRPTANSGGKSNSGNKKKVK. A compositionally biased stretch (basic and acidic residues) spans 151 to 168; it reads IKEDPEDNQKSNEEESKP.

Component of the NuA3 histone acetyltransferase (HAT) complex. The NuA3 HAT complex has 2 functionally distinct forms that participate in transcription. The NuA3a HAT complex is composed of at least NTO1, SAS3, TAF14, YNG1 and EAF6. The NuA3b HAT complex contains an additional subunit, PDP3.

It is found in the nucleus. It localises to the cytoplasm. Its function is as follows. Histone-binding component of the NuA3b histone acetyltransferase complex. Targets the NuA3b HAT complex via histone H3K36me3 to the coding regions of actively transcribed genes to coordinate transcription elongation. Stimulates elongation by RNA polymerase II in vitro. This Saccharomyces cerevisiae (strain ATCC 204508 / S288c) (Baker's yeast) protein is NuA3 HAT complex component PDP3.